Reading from the N-terminus, the 146-residue chain is Hemoglobin subunit beta (146 aa).

Residue Val-1 is modified to N-acetylvaline. The region spanning His-2–His-146 is the Globin domain. Thr-12 carries the phosphothreonine modification. A Phosphoserine modification is found at Ser-44. An N6-acetyllysine modification is found at Lys-59. His-63 lines the heme b pocket. Lys-82 carries the post-translational modification N6-acetyllysine. His-92 contacts heme b. Cys-93 carries the post-translational modification S-nitrosocysteine. Position 144 is an N6-acetyllysine (Lys-144).

It belongs to the globin family. In terms of assembly, heterotetramer of two alpha chains and two beta chains. As to expression, red blood cells.

Functionally, involved in oxygen transport from the lung to the various peripheral tissues. The polypeptide is Hemoglobin subunit beta (HBB) (Mustela lutreola (European mink)).